Consider the following 341-residue polypeptide: Ribosomal RNA small subunit methyltransferase C (341 aa).

This sequence belongs to the methyltransferase superfamily. RsmC family. Monomer.

The protein localises to the cytoplasm. It catalyses the reaction guanosine(1207) in 16S rRNA + S-adenosyl-L-methionine = N(2)-methylguanosine(1207) in 16S rRNA + S-adenosyl-L-homocysteine + H(+). Specifically methylates the guanine in position 1207 of 16S rRNA in the 30S particle. The protein is Ribosomal RNA small subunit methyltransferase C of Vibrio parahaemolyticus serotype O3:K6 (strain RIMD 2210633).